A 673-amino-acid polypeptide reads, in one-letter code: MADPATYRPAPGTIPVEPGVYKFRDSYGRVIYVGKAKSLRSRLNSYFADVASLHPRTKQMVTTAASVEWTVVSTEVEALQLEYNWIKEFDPRFNVRYRDDKSYPVLAVTLNEEYPRLFVYRGARKKGVRYFGPYAHAWAIRETLDLLLRVFPARTCSTGVFKRHNQIGRPCLLGYIDKCSAPCVGRVSAEEHRAIVEDFCDFLAGRTDKMVRELERRMHAAAEDLDFETAARLRDDVQALRRALEKQAVVLGTGTDADVIAFATDELEVAVQIFHVRDGRVRGQRGWVVDKSGDAVDSGTGDDETGALVEQFLTQFYGEQVAYADQTPDEQPATVVPREVLVPQLPAGHEQLQEWLSRLRGSAVRLRVPQRGDKKALAETVERNAKEALAQHKLKRAGDLTSRSAALQDIQDALDLDSAPLRIECVDISHVQGTDVVASLVVFEDGLPRKSDYRHYAIKEAAGEGRSDDVGSIAEVTRRRFYRLRKERDEAERDELDGTAAGAPLVDDDETPTSRPGIDPTTGRPRKFAYPPNLYVVDGGAPQVAAAAEVLDELGITDVAVIGLAKRLEEVWVPGEPDPVILPRNSEALFLLQRVRDEAHRFAITFHRSKRSRRMTASALDSVRGLGAARRTALVTHFGSVAKLKEATVEEITEVPGIGVATAKAVLAALHQE.

The region spanning 16–95 (VEPGVYKFRD…IKEFDPRFNV (80 aa)) is the GIY-YIG domain. The UVR domain occupies 208–243 (DKMVRELERRMHAAAEDLDFETAARLRDDVQALRRA). The segment at 488–526 (RDEAERDELDGTAAGAPLVDDDETPTSRPGIDPTTGRPR) is disordered.

This sequence belongs to the UvrC family. In terms of assembly, interacts with UvrB in an incision complex.

The protein localises to the cytoplasm. Functionally, the UvrABC repair system catalyzes the recognition and processing of DNA lesions. UvrC both incises the 5' and 3' sides of the lesion. The N-terminal half is responsible for the 3' incision and the C-terminal half is responsible for the 5' incision. In Nocardia farcinica (strain IFM 10152), this protein is UvrABC system protein C.